Here is a 340-residue protein sequence, read N- to C-terminus: N-acetyl-gamma-glutamyl-phosphate reductase (340 aa).

Residue C151 is part of the active site.

Belongs to the NAGSA dehydrogenase family. Type 1 subfamily.

It is found in the cytoplasm. It catalyses the reaction N-acetyl-L-glutamate 5-semialdehyde + phosphate + NADP(+) = N-acetyl-L-glutamyl 5-phosphate + NADPH + H(+). Its pathway is amino-acid biosynthesis; L-arginine biosynthesis; N(2)-acetyl-L-ornithine from L-glutamate: step 3/4. Its function is as follows. Catalyzes the NADPH-dependent reduction of N-acetyl-5-glutamyl phosphate to yield N-acetyl-L-glutamate 5-semialdehyde. This Aquifex aeolicus (strain VF5) protein is N-acetyl-gamma-glutamyl-phosphate reductase.